The primary structure comprises 99 residues: NADH-quinone oxidoreductase subunit K (99 aa).

Helical transmembrane passes span 3–23 (PDNYLYLSALLFTIGAAGVLL), 28–48 (IVMFMCVELMLNAGNLAFVTF), and 59–79 (VVAFFTMVVAACEVVIGLAII).

Belongs to the complex I subunit 4L family. In terms of assembly, NDH-1 is composed of 14 different subunits. Subunits NuoA, H, J, K, L, M, N constitute the membrane sector of the complex.

The protein localises to the cell membrane. The enzyme catalyses a quinone + NADH + 5 H(+)(in) = a quinol + NAD(+) + 4 H(+)(out). Its function is as follows. NDH-1 shuttles electrons from NADH, via FMN and iron-sulfur (Fe-S) centers, to quinones in the respiratory chain. The immediate electron acceptor for the enzyme in this species is believed to be a menaquinone. Couples the redox reaction to proton translocation (for every two electrons transferred, four hydrogen ions are translocated across the cytoplasmic membrane), and thus conserves the redox energy in a proton gradient. In Mycolicibacterium gilvum (strain PYR-GCK) (Mycobacterium gilvum (strain PYR-GCK)), this protein is NADH-quinone oxidoreductase subunit K.